Consider the following 137-residue polypeptide: Cofilin-1A (137 aa).

Residues 2–135 (SSGIALAPNC…KDSCFYEKCT (134 aa)) form the ADF-H domain.

Belongs to the actin-binding proteins ADF family.

The protein localises to the nucleus matrix. It is found in the cytoplasm. The protein resides in the cytoskeleton. Functionally, controls reversibly actin polymerization and depolymerization in a pH-sensitive manner. It has the ability to bind G- and F-actin in a 1:1 ratio of cofilin to actin. It is the major component of intranuclear and cytoplasmic actin rods. The sequence is that of Cofilin-1A (cofA) from Dictyostelium discoideum (Social amoeba).